Here is a 168-residue protein sequence, read N- to C-terminus: DNA damage-inducible transcript 3 protein (168 aa).

An interaction with TRIB3 region spans residues 10 to 18 (FGALSSWEL). An N-terminal region spans residues 10–26 (FGALSSWELEAWYEDLQ). Phosphoserine; by CK2 occurs at positions 14, 15, 30, and 31. The interval 31–141 (SDENRGTCVS…QLAEENERLK (111 aa)) is disordered. Residues 76–90 (SQSPCSPESSQSSLA) are compositionally biased toward low complexity. A phosphoserine; by MAPK14 mark is found at Ser78 and Ser81. Residues 98 to 161 (QGRTRKRKQS…EATRRALIDR (64 aa)) enclose the bZIP domain. Residues 100 to 129 (RTRKRKQSGQSPARAGKQRMKEKEQENERK) form a basic motif region. Basic and acidic residues predominate over residues 118–141 (RMKEKEQENERKVAQLAEENERLK). The interval 133–147 (LAEENERLKQEIERL) is leucine-zipper.

The protein belongs to the bZIP family. As to quaternary structure, heterodimer. Interacts with TCF7L2/TCF4, EP300/P300, HDAC1, HDAC5 and HDAC6. Interacts with TRIB3 which blocks its association with EP300/P300. Interacts with FOXO3, CEBPB and ATF4. In terms of processing, ubiquitinated, leading to its degradation by the proteasome. Post-translationally, phosphorylation at serine residues by MAPK14 enhances its transcriptional activation activity while phosphorylation at serine residues by CK2 inhibits its transcriptional activation activity.

It is found in the cytoplasm. The protein localises to the nucleus. Multifunctional transcription factor in ER stress response. Plays an essential role in the response to a wide variety of cell stresses and induces cell cycle arrest and apoptosis in response to ER stress. Plays a dual role both as an inhibitor of CCAAT/enhancer-binding protein (C/EBP) function and as an activator of other genes. Acts as a dominant-negative regulator of C/EBP-induced transcription: dimerizes with members of the C/EBP family, impairs their association with C/EBP binding sites in the promoter regions, and inhibits the expression of C/EBP regulated genes. Positively regulates the transcription of TRIB3, IL6, IL8, IL23, TNFRSF10B/DR5, PPP1R15A/GADD34, BBC3/PUMA, BCL2L11/BIM and ERO1L. Negatively regulates; expression of BCL2 and MYOD1, ATF4-dependent transcriptional activation of asparagine synthetase (ASNS), CEBPA-dependent transcriptional activation of hepcidin (HAMP) and CEBPB-mediated expression of peroxisome proliferator-activated receptor gamma (PPARG). Inhibits the canonical Wnt signaling pathway by binding to TCF7L2/TCF4, impairing its DNA-binding properties and repressing its transcriptional activity. Plays a regulatory role in the inflammatory response through the induction of caspase-11 (CASP4/CASP11) which induces the activation of caspase-1 (CASP1) and both these caspases increase the activation of pro-IL1B to mature IL1B which is involved in the inflammatory response. The polypeptide is DNA damage-inducible transcript 3 protein (DDIT3) (Bos taurus (Bovine)).